Reading from the N-terminus, the 629-residue chain is tRNA uridine 5-carboxymethylaminomethyl modification enzyme MnmG (629 aa).

FAD-binding positions include 13-18 (GGGHAG), valine 125, and serine 180. 273–287 (GPRYCPSIEDKVMRF) serves as a coordination point for NAD(+). Glutamine 370 is an FAD binding site.

This sequence belongs to the MnmG family. Homodimer. Heterotetramer of two MnmE and two MnmG subunits. The cofactor is FAD.

It is found in the cytoplasm. NAD-binding protein involved in the addition of a carboxymethylaminomethyl (cmnm) group at the wobble position (U34) of certain tRNAs, forming tRNA-cmnm(5)s(2)U34. The polypeptide is tRNA uridine 5-carboxymethylaminomethyl modification enzyme MnmG (Salmonella schwarzengrund (strain CVM19633)).